The sequence spans 170 residues: Transcription factor E (170 aa).

The HTH TFE/IIEalpha-type domain maps to 1–93; it reads MKDVYLYIVE…TWYVNDEVIS (93 aa).

Belongs to the TFE family. In terms of assembly, monomer. Interaction with RNA polymerase subunits RpoF and RpoE is necessary for Tfe stimulatory transcription activity. Able to interact with Tbp and RNA polymerase in the absence of DNA promoter. Interacts both with the preinitiation and elongation complexes.

Transcription factor that plays a role in the activation of archaeal genes transcribed by RNA polymerase. Facilitates transcription initiation by enhancing TATA-box recognition by TATA-box-binding protein (Tbp), and transcription factor B (Tfb) and RNA polymerase recruitment. Not absolutely required for transcription in vitro, but particularly important in cases where Tbp or Tfb function is not optimal. It dynamically alters the nucleic acid-binding properties of RNA polymerases by stabilizing the initiation complex and destabilizing elongation complexes. Seems to translocate with the RNA polymerase following initiation and acts by binding to the non template strand of the transcription bubble in elongation complexes. The protein is Transcription factor E of Pyrobaculum calidifontis (strain DSM 21063 / JCM 11548 / VA1).